We begin with the raw amino-acid sequence, 591 residues long: Aspartate--tRNA ligase (591 aa).

An L-aspartate-binding site is contributed by glutamate 176. Positions 200–203 (QILK) are aspartate. Arginine 222 is a binding site for L-aspartate. Residues 222–224 (RDE) and glutamine 231 each bind ATP. Histidine 450 provides a ligand contact to L-aspartate. An ATP-binding site is contributed by glutamate 484. Arginine 491 contacts L-aspartate. 536-539 (GLDR) is a binding site for ATP.

This sequence belongs to the class-II aminoacyl-tRNA synthetase family. Type 1 subfamily. Homodimer.

The protein localises to the cytoplasm. It catalyses the reaction tRNA(Asp) + L-aspartate + ATP = L-aspartyl-tRNA(Asp) + AMP + diphosphate. In terms of biological role, catalyzes the attachment of L-aspartate to tRNA(Asp) in a two-step reaction: L-aspartate is first activated by ATP to form Asp-AMP and then transferred to the acceptor end of tRNA(Asp). The chain is Aspartate--tRNA ligase from Listeria monocytogenes serovar 1/2a (strain ATCC BAA-679 / EGD-e).